Reading from the N-terminus, the 429-residue chain is Enolase (429 aa).

Gln163 contacts (2R)-2-phosphoglycerate. Catalysis depends on Glu205, which acts as the Proton donor. Asp242, Glu286, and Asp313 together coordinate Mg(2+). Residues Lys338, Arg367, Ser368, and Lys389 each coordinate (2R)-2-phosphoglycerate. Lys338 functions as the Proton acceptor in the catalytic mechanism.

The protein belongs to the enolase family. Requires Mg(2+) as cofactor.

The protein localises to the cytoplasm. Its subcellular location is the secreted. It is found in the cell surface. The enzyme catalyses (2R)-2-phosphoglycerate = phosphoenolpyruvate + H2O. It participates in carbohydrate degradation; glycolysis; pyruvate from D-glyceraldehyde 3-phosphate: step 4/5. Functionally, catalyzes the reversible conversion of 2-phosphoglycerate (2-PG) into phosphoenolpyruvate (PEP). It is essential for the degradation of carbohydrates via glycolysis. The sequence is that of Enolase from Geobacter metallireducens (strain ATCC 53774 / DSM 7210 / GS-15).